Consider the following 86-residue polypeptide: Cell division topological specificity factor (86 aa).

The protein belongs to the MinE family.

Prevents the cell division inhibition by proteins MinC and MinD at internal division sites while permitting inhibition at polar sites. This ensures cell division at the proper site by restricting the formation of a division septum at the midpoint of the long axis of the cell. The sequence is that of Cell division topological specificity factor from Stenotrophomonas maltophilia (strain R551-3).